Consider the following 255-residue polypeptide: Fe(3+) dicitrate transport ATP-binding protein FecE (255 aa).

The 236-residue stretch at 3 to 238 (LRTENLTVSY…GLLRTVFSVE (236 aa)) folds into the ABC transporter domain. Position 35 to 42 (35 to 42 (GPNGCGKS)) interacts with ATP.

This sequence belongs to the ABC transporter superfamily. The complex is composed of two ATP-binding proteins (FecE), two transmembrane proteins (FecC and FecD) and a solute-binding protein (FecB).

It is found in the cell inner membrane. It catalyses the reaction iron(III) dicitrate(out) + ATP + H2O = iron(III) dicitrate(in) + ADP + phosphate + H(+). Its function is as follows. Part of the ABC transporter complex FecBCDE involved in citrate-dependent Fe(3+) uptake. Binds ATP. Probably responsible for energy coupling to the transport system. The protein is Fe(3+) dicitrate transport ATP-binding protein FecE of Escherichia coli (strain K12).